Consider the following 792-residue polypeptide: Zinc finger CCCH domain-containing protein 11A (792 aa).

C3H1-type zinc fingers lie at residues 2–29 (PNQGEDCYFYFYSTCAKGDSCPFRHCEA), 31–57 (LGNETVCTLWQEGRCFRQVCRFRHMEI), and 60–87 (KRSEIPCYWENQPVGCQKLNCAFHHTRS). Disordered regions lie at residues 103-191 (PTVP…VHNG), 223-331 (KKMK…KAGE), and 345-443 (ASQK…RSMQ). Ser108 bears the Phosphoserine mark. Glycyl lysine isopeptide (Lys-Gly) (interchain with G-Cter in SUMO2) cross-links involve residues Lys114 and Lys124. Over residues 115 to 135 (TSQLTVQQSKLSVQSNPSPQL) the composition is skewed to polar residues. Ser132 carries the post-translational modification Phosphoserine. Lys140 participates in a covalent cross-link: Glycyl lysine isopeptide (Lys-Gly) (interchain with G-Cter in SUMO2). Phosphoserine is present on residues Ser149, Ser171, and Ser289. Residues 160–175 (ADDDEDDDDQFSEEGD) show a composition bias toward acidic residues. 2 stretches are compositionally biased toward basic and acidic residues: residues 308-331 (KKVESPETNIDKAPKKERGHKAGE) and 345-360 (ASQKRGELQTKLKAEE). The stretch at 338-360 (EEILLERASQKRGELQTKLKAEE) forms a coiled coil. Ser346 bears the Phosphoserine mark. Residues 367-376 (SPSGTKSSSS) show a composition bias toward low complexity. 2 stretches are compositionally biased toward basic and acidic residues: residues 393–405 (QQEMERQKSKKDT) and 431–443 (QPEEPAGRARSMQ). Lys454 participates in a covalent cross-link: Glycyl lysine isopeptide (Lys-Gly) (interchain with G-Cter in SUMO2). Disordered stretches follow at residues 458 to 531 (ALRV…PTKL) and 545 to 571 (QRLQERGASQKEKAALSSVRGDEASSY). Residues 461 to 473 (VQQSSESSGNSRP) are compositionally biased toward polar residues. Basic and acidic residues-rich tracts occupy residues 492–501 (GVKEEKKCGL) and 545–558 (QRLQERGASQKEKA). Residue Lys601 forms a Glycyl lysine isopeptide (Lys-Gly) (interchain with G-Cter in SUMO2) linkage. The disordered stretch occupies residues 690-750 (LSEDKPVTMS…SASTGKPPLS (61 aa)). A compositionally biased stretch (polar residues) spans 698–715 (MSETENPKDSSVLSSAQA). The segment covering 717-730 (SEPLLPEGSGPSSS) has biased composition (low complexity).

Interacts with TREX complex components THOC2, DDX39 and POLDIP3; the interactions are ATP-dependent. Interacts with PABPN1; this interaction retains ZC3H11A in nuclear speckles. Interacts with KPNA3.

The protein resides in the nucleus speckle. Through its association with TREX complex components, may participate in the export and post-transcriptional coordination of selected mRNA transcripts, including those required to maintain the metabolic processes in embryonic cells. Binds RNA. The chain is Zinc finger CCCH domain-containing protein 11A (Zc3h11a) from Mus musculus (Mouse).